Reading from the N-terminus, the 188-residue chain is Pyridoxal 5'-phosphate synthase subunit PdxT (188 aa).

47–49 (GES) serves as a coordination point for L-glutamine. Cys79 functions as the Nucleophile in the catalytic mechanism. Residues Arg105 and 134 to 135 (IR) contribute to the L-glutamine site. Residues His170 and Glu172 each act as charge relay system in the active site.

This sequence belongs to the glutaminase PdxT/SNO family. In terms of assembly, in the presence of PdxS, forms a dodecamer of heterodimers. Only shows activity in the heterodimer.

The catalysed reaction is aldehydo-D-ribose 5-phosphate + D-glyceraldehyde 3-phosphate + L-glutamine = pyridoxal 5'-phosphate + L-glutamate + phosphate + 3 H2O + H(+). It catalyses the reaction L-glutamine + H2O = L-glutamate + NH4(+). It functions in the pathway cofactor biosynthesis; pyridoxal 5'-phosphate biosynthesis. Its function is as follows. Catalyzes the hydrolysis of glutamine to glutamate and ammonia as part of the biosynthesis of pyridoxal 5'-phosphate. The resulting ammonia molecule is channeled to the active site of PdxS. The chain is Pyridoxal 5'-phosphate synthase subunit PdxT from Listeria innocua serovar 6a (strain ATCC BAA-680 / CLIP 11262).